The following is a 248-amino-acid chain: 3-deoxy-manno-octulosonate cytidylyltransferase (248 aa).

Belongs to the KdsB family.

It localises to the cytoplasm. The catalysed reaction is 3-deoxy-alpha-D-manno-oct-2-ulosonate + CTP = CMP-3-deoxy-beta-D-manno-octulosonate + diphosphate. It functions in the pathway nucleotide-sugar biosynthesis; CMP-3-deoxy-D-manno-octulosonate biosynthesis; CMP-3-deoxy-D-manno-octulosonate from 3-deoxy-D-manno-octulosonate and CTP: step 1/1. Its pathway is bacterial outer membrane biogenesis; lipopolysaccharide biosynthesis. Activates KDO (a required 8-carbon sugar) for incorporation into bacterial lipopolysaccharide in Gram-negative bacteria. In Salmonella dublin (strain CT_02021853), this protein is 3-deoxy-manno-octulosonate cytidylyltransferase.